Here is a 264-residue protein sequence, read N- to C-terminus: [LysW]-aminoadipate/[LysW]-glutamate kinase (264 aa).

Residues 35–36 (GG), Arg62, and Asn167 each bind substrate.

This sequence belongs to the acetylglutamate kinase family. LysZ subfamily.

It is found in the cytoplasm. It carries out the reaction [amino-group carrier protein]-C-terminal-N-(1,4-dicarboxybutan-1-yl)-L-glutamine + ATP = [amino-group carrier protein]-C-terminal-N-(1-carboxy-5-phosphooxy-5-oxopentan-1-yl)-L-glutamine + ADP. The catalysed reaction is [amino-group carrier protein]-C-terminal-gamma-(L-glutamyl)-L-glutamate + ATP = [amino-group carrier protein]-C-terminal-gamma-(5-phospho-L-glutamyl)-L-glutamate + ADP. Its pathway is amino-acid biosynthesis; L-lysine biosynthesis via AAA pathway; L-lysine from L-alpha-aminoadipate (Thermus route): step 2/5. The protein operates within amino-acid biosynthesis; L-arginine biosynthesis. Functionally, involved in both the arginine and lysine biosynthetic pathways. Phosphorylates the LysW-bound precursors glutamate (for arginine biosynthesis), respectively alpha-aminoadipate (for lysine biosynthesis). The protein is [LysW]-aminoadipate/[LysW]-glutamate kinase of Saccharolobus islandicus (strain Y.N.15.51 / Yellowstone #2) (Sulfolobus islandicus).